We begin with the raw amino-acid sequence, 264 residues long: Hydroxyethylthiazole kinase (264 aa).

Methionine 41 lines the substrate pocket. The ATP site is built by lysine 117 and serine 163. Glycine 190 is a substrate binding site.

Belongs to the Thz kinase family. Mg(2+) is required as a cofactor.

The enzyme catalyses 5-(2-hydroxyethyl)-4-methylthiazole + ATP = 4-methyl-5-(2-phosphooxyethyl)-thiazole + ADP + H(+). It functions in the pathway cofactor biosynthesis; thiamine diphosphate biosynthesis; 4-methyl-5-(2-phosphoethyl)-thiazole from 5-(2-hydroxyethyl)-4-methylthiazole: step 1/1. Functionally, catalyzes the phosphorylation of the hydroxyl group of 4-methyl-5-beta-hydroxyethylthiazole (THZ). The protein is Hydroxyethylthiazole kinase of Thermoanaerobacter pseudethanolicus (strain ATCC 33223 / 39E) (Clostridium thermohydrosulfuricum).